A 1007-amino-acid chain; its full sequence is Serine/threonine-protein kinase PRP4 homolog (1007 aa).

The interval 1–104 (MAATEPPSLR…PAKRTKLDDL (104 aa)) is disordered. Position 2 is an N-acetylalanine (Ala-2). Residues Ser-8, Ser-21, Ser-24, and Ser-33 each carry the phosphoserine modification. Basic residues-rich tracts occupy residues 40–60 (KHSRHKKKKHKHRSKHKKHKH) and 68–82 (KKHKHKHKHKKHKRK). The span at 83 to 92 (EVLDASDKEG) shows a compositional bias: basic and acidic residues. Residues Ser-88 and Ser-94 each carry the phosphoserine modification. An N6-acetyllysine; alternate modification is found at Lys-100. Residue Lys-100 forms a Glycyl lysine isopeptide (Lys-Gly) (interchain with G-Cter in SUMO2); alternate linkage. Residue Lys-112 forms a Glycyl lysine isopeptide (Lys-Gly) (interchain with G-Cter in SUMO2) linkage. Lys-118 participates in a covalent cross-link: Glycyl lysine isopeptide (Lys-Gly) (interchain with G-Cter in SUMO2); alternate. A Glycyl lysine isopeptide (Lys-Gly) (interchain with G-Cter in SUMO1); alternate cross-link involves residue Lys-118. The residue at position 132 (Ser-132) is a Phosphoserine. Tyr-141 is modified (phosphotyrosine). Disordered regions lie at residues 141–535 (YESG…EDEE) and 560–583 (NISVPSEPSSPQSSTRSRSPSPDD). Ser-143, Ser-145, and Ser-167 each carry phosphoserine. Residues 158–169 (GNRSSTRSSSTR) are compositionally biased toward low complexity. Glycyl lysine isopeptide (Lys-Gly) (interchain with G-Cter in SUMO2) cross-links involve residues Lys-171 and Lys-178. 2 stretches are compositionally biased toward basic residues: residues 180–203 (SAKKRSKSRSKERTRHRSDKRKSK) and 215–231 (RSKSKERRKSKSPSKRS). Ser-240, Ser-242, Ser-258, Ser-278, Ser-292, and Ser-294 each carry phosphoserine. Basic and acidic residues predominate over residues 248–271 (RSQEKVGKARSPADEKIKSEEKGK). A compositionally biased stretch (basic and acidic residues) spans 294-303 (SPVDLRDKSK). Residues 304 to 315 (DRRSRSKERKSK) are compositionally biased toward basic residues. Residues 316–325 (RSEIDKEKKP) show a composition bias toward basic and acidic residues. A phosphoserine mark is found at Ser-328, Ser-354, Ser-356, Ser-366, and Ser-368. A compositionally biased stretch (basic residues) spans 342–367 (PSRRPGRSPKRRSLSPKQRDKSRRSR). Thr-385 bears the Phosphothreonine mark. Ser-387 carries the post-translational modification Phosphoserine. Composition is skewed to basic and acidic residues over residues 395–408 (RSLERKRREPERRR) and 415–429 (RPRDDILGRCERSKD). Residues Ser-427, Ser-431, and Ser-437 each carry the phosphoserine modification. Basic residues predominate over residues 438–497 (PSRRRSRSPIRRRSRSPLRRSRSPRRRSRSPRRRDRSRRSRSRLRRRSRSRGGHRRRSRS). Ser-518, Ser-519, Ser-520, Ser-565, Ser-569, Ser-576, Ser-578, and Ser-580 each carry phosphoserine. Residues 518–535 (SSSDDNLEDFDVEEEDEE) are compositionally biased toward acidic residues. Residues 562–581 (SVPSEPSSPQSSTRSRSPSP) show a composition bias toward low complexity. Residues Lys-593 and Lys-659 each participate in a glycyl lysine isopeptide (Lys-Gly) (interchain with G-Cter in SUMO2) cross-link. The region spanning 687–1003 (YNVYGYTGQG…INQALQHAFI (317 aa)) is the Protein kinase domain. ATP is bound by residues 693–701 (TGQGVFSNV) and Lys-717. Residue Lys-717 is modified to N6-acetyllysine. Catalysis depends on Asp-815, which acts as the Proton acceptor. Tyr-849 is subject to Phosphotyrosine. At Ser-852 the chain carries Phosphoserine.

This sequence belongs to the protein kinase superfamily. CMGC Ser/Thr protein kinase family. Interacts with CLK1 C-terminus. Associates with the U5 snRNP and NCOR1 deacetylase complexes. Identified in the spliceosome C complex. Post-translationally, phosphorylated by CLK1. Autophosphorylated; phosphorylation inhibits interaction with its targets, such as PRPF6 or SMARCA4.

The protein localises to the nucleus. It is found in the chromosome. Its subcellular location is the centromere. It localises to the kinetochore. The enzyme catalyses L-seryl-[protein] + ATP = O-phospho-L-seryl-[protein] + ADP + H(+). It carries out the reaction L-threonyl-[protein] + ATP = O-phospho-L-threonyl-[protein] + ADP + H(+). Functionally, serine/threonine kinase involved in spliceosomal assembly as well as mitosis and signaling regulation. Connects chromatin mediated regulation of transcription and pre-mRNA splicing. During spliceosomal assembly, interacts with and phosphorylates PRPF6 and PRPF31, components of the U4/U6-U5 tri-small nuclear ribonucleoprotein (snRNP), to facilitate the formation of the spliceosome B complex. Plays a role in regulating transcription and the spindle assembly checkpoint (SAC). Associates with U5 snRNP and NCOR1 deacetylase complexes which may allow a coordination of pre-mRNA splicing with chromatin remodeling events involved in transcriptional regulation. Associates and probably phosphorylates SMARCA4 and NCOR1. Phosphorylates SRSF1. Associates with kinetochores during mitosis and is necessary for recruitment and maintenance of the checkpoint proteins such as MAD1L1 and MAD12L1 at the kinetochores. Phosphorylates and regulates the activity of the transcription factors such as ELK1 and KLF13. Phosphorylates nuclear YAP1 and WWTR1/TAZ which induces nuclear exclusion and regulates Hippo signaling pathway, involved in tissue growth control. This chain is Serine/threonine-protein kinase PRP4 homolog (Prp4k), found in Rattus norvegicus (Rat).